We begin with the raw amino-acid sequence, 303 residues long: Indole-3-glycerol phosphate synthase (303 aa).

This sequence belongs to the TrpC family.

It catalyses the reaction 1-(2-carboxyphenylamino)-1-deoxy-D-ribulose 5-phosphate + H(+) = (1S,2R)-1-C-(indol-3-yl)glycerol 3-phosphate + CO2 + H2O. The protein operates within amino-acid biosynthesis; L-tryptophan biosynthesis; L-tryptophan from chorismate: step 4/5. This is Indole-3-glycerol phosphate synthase from Acaryochloris marina (strain MBIC 11017).